A 79-amino-acid polypeptide reads, in one-letter code: Protein FAM236C (79 aa).

A disordered region spans residues 19–48 (KGPQKDPEELVAVSDTAEDPSSGTGLPREP).

The protein belongs to the FAM236 family.

This Homo sapiens (Human) protein is Protein FAM236C.